Reading from the N-terminus, the 323-residue chain is Sphingolipid delta(4)-desaturase DES1 (323 aa).

A lipid anchor (N-myristoyl glycine) is attached at glycine 2. 2 helical membrane-spanning segments follow: residues 41 to 61 (PNLI…FYIV) and 68 to 88 (WVIF…TLGI). The Histidine box-1 motif lies at 89–93 (HEIAH). A helical transmembrane segment spans residues 107–127 (WFGMFANLPIGIPYSVSFKSY). Residues 128 to 132 (HMDHH) carry the Histidine box-2 motif. 3 helical membrane passes run 152 to 172 (FFCT…FYAF), 184 to 204 (YLEV…YYFL), and 209 to 229 (LVYM…SGHF). Positions 259–263 (HNEHH) match the Histidine box-3 motif. Serine 307 is modified (phosphoserine).

It belongs to the fatty acid desaturase type 1 family. DEGS subfamily. In terms of assembly, interacts with RLBP1; the interaction increases synthesis of chromophore-precursors by DEGS1. In terms of processing, myristoylation can target the enzyme to the mitochondria leading to an increase in ceramide levels.

It localises to the mitochondrion membrane. It is found in the endoplasmic reticulum membrane. It catalyses the reaction an N-acylsphinganine + 2 Fe(II)-[cytochrome b5] + O2 + 2 H(+) = an N-acylsphing-4-enine + 2 Fe(III)-[cytochrome b5] + 2 H2O. The catalysed reaction is all-trans-retinol = 11-cis-retinol. The enzyme catalyses all-trans-retinol = 9-cis-retinol. It carries out the reaction all-trans-retinol = 13-cis-retinol. It catalyses the reaction 11-cis-retinol = 13-cis-retinol. The catalysed reaction is 11-cis-retinol = 9-cis-retinol. Has sphingolipid-delta-4-desaturase activity. Converts D-erythro-sphinganine to D-erythro-sphingosine (E-sphing-4-enine). Catalyzes the equilibrium isomerization of retinols. The protein is Sphingolipid delta(4)-desaturase DES1 (DEGS1) of Pongo abelii (Sumatran orangutan).